The sequence spans 201 residues: 8-oxoguanine DNA glycosylase/AP lyase (201 aa).

Residues Lys-126 and Asp-144 contribute to the active site.

Belongs to the type-2 OGG1 family.

The enzyme catalyses 2'-deoxyribonucleotide-(2'-deoxyribose 5'-phosphate)-2'-deoxyribonucleotide-DNA = a 3'-end 2'-deoxyribonucleotide-(2,3-dehydro-2,3-deoxyribose 5'-phosphate)-DNA + a 5'-end 5'-phospho-2'-deoxyribonucleoside-DNA + H(+). Functionally, catalyzes the excision of an oxidatively damaged form of guanine (7,8-dihydro-8-oxoguanine = 8-oxoG) from DNA. Also cleaves the DNA backbone at apurinic/apyrimidinic sites (AP sites). In Metallosphaera sedula (strain ATCC 51363 / DSM 5348 / JCM 9185 / NBRC 15509 / TH2), this protein is 8-oxoguanine DNA glycosylase/AP lyase.